Consider the following 343-residue polypeptide: F17e-G fimbrial adhesin (343 aa).

Positions 1-22 (MTNFYKVFLAVFILVCCNISHA) are cleaved as a signal peptide. A receptor-binding lectin domain region spans residues 23–199 (AVSFIGSTEN…LNPFTLNDTV (177 aa)). A carbohydrate is bound by residues 65-66 (AN), 110-111 (DT), and 138-141 (STQG). C75 and C132 are oxidised to a cystine. The interval 200-343 (TSCRLLTPSA…GISTFTFSYQ (144 aa)) is fimbrillin-binding domain. A disordered region spans residues 287-307 (LKFGPDSPVKGNENQWQLSTG). Residues 298-307 (NENQWQLSTG) are compositionally biased toward polar residues.

The protein belongs to the fimbrial protein family.

It is found in the fimbrium. Its function is as follows. Essential fimbrial adhesion factor that mediates binding to N-acetylglucosamine-containing receptors in the host intestinal microvilli, leading to colonization of the intestinal tissue, and diarrhea or septicemia. Also confers adhesiveness to laminin and basement membranes. The chain is F17e-G fimbrial adhesin (f17eG) from Escherichia coli.